The sequence spans 282 residues: 2-dehydro-3-deoxyphosphooctonate aldolase (282 aa).

It belongs to the KdsA family.

It localises to the cytoplasm. It carries out the reaction D-arabinose 5-phosphate + phosphoenolpyruvate + H2O = 3-deoxy-alpha-D-manno-2-octulosonate-8-phosphate + phosphate. Its pathway is carbohydrate biosynthesis; 3-deoxy-D-manno-octulosonate biosynthesis; 3-deoxy-D-manno-octulosonate from D-ribulose 5-phosphate: step 2/3. It participates in bacterial outer membrane biogenesis; lipopolysaccharide biosynthesis. The polypeptide is 2-dehydro-3-deoxyphosphooctonate aldolase (Shewanella baltica (strain OS223)).